A 159-amino-acid polypeptide reads, in one-letter code: Protein Smg homolog (159 aa).

This sequence belongs to the Smg family.

The sequence is that of Protein Smg homolog from Nitrosococcus oceani (strain ATCC 19707 / BCRC 17464 / JCM 30415 / NCIMB 11848 / C-107).